The following is a 467-amino-acid chain: ATP-dependent protease ATPase subunit HslU (467 aa).

Residues Ile18, 60 to 65, Asp280, Glu345, and Arg417 contribute to the ATP site; that span reads GVGKTE.

Belongs to the ClpX chaperone family. HslU subfamily. A double ring-shaped homohexamer of HslV is capped on each side by a ring-shaped HslU homohexamer. The assembly of the HslU/HslV complex is dependent on binding of ATP.

The protein localises to the cytoplasm. Its function is as follows. ATPase subunit of a proteasome-like degradation complex; this subunit has chaperone activity. The binding of ATP and its subsequent hydrolysis by HslU are essential for unfolding of protein substrates subsequently hydrolyzed by HslV. HslU recognizes the N-terminal part of its protein substrates and unfolds these before they are guided to HslV for hydrolysis. In Lactobacillus helveticus (strain DPC 4571), this protein is ATP-dependent protease ATPase subunit HslU.